The primary structure comprises 383 residues: Succinyl-diaminopimelate desuccinylase (383 aa).

Residue histidine 74 participates in Zn(2+) binding. Aspartate 76 is an active-site residue. Aspartate 107 lines the Zn(2+) pocket. Catalysis depends on glutamate 141, which acts as the Proton acceptor. Zn(2+)-binding residues include glutamate 142, glutamate 170, and histidine 356.

It belongs to the peptidase M20A family. DapE subfamily. In terms of assembly, homodimer. Zn(2+) serves as cofactor. Co(2+) is required as a cofactor.

The catalysed reaction is N-succinyl-(2S,6S)-2,6-diaminopimelate + H2O = (2S,6S)-2,6-diaminopimelate + succinate. It participates in amino-acid biosynthesis; L-lysine biosynthesis via DAP pathway; LL-2,6-diaminopimelate from (S)-tetrahydrodipicolinate (succinylase route): step 3/3. In terms of biological role, catalyzes the hydrolysis of N-succinyl-L,L-diaminopimelic acid (SDAP), forming succinate and LL-2,6-diaminopimelate (DAP), an intermediate involved in the bacterial biosynthesis of lysine and meso-diaminopimelic acid, an essential component of bacterial cell walls. The sequence is that of Succinyl-diaminopimelate desuccinylase from Cupriavidus necator (strain ATCC 17699 / DSM 428 / KCTC 22496 / NCIMB 10442 / H16 / Stanier 337) (Ralstonia eutropha).